The following is a 190-amino-acid chain: UPF0340 protein BT9727_4999 (190 aa).

Belongs to the UPF0340 family.

The sequence is that of UPF0340 protein BT9727_4999 from Bacillus thuringiensis subsp. konkukian (strain 97-27).